The chain runs to 111 residues: Disintegrin DS-AS (111 aa).

The signal sequence occupies residues 1 to 20 (MIQVLLVIICLAVFPYQGSC). Positions 21–47 (IILESGNVNDYEIVYPKKLIVLPTGAM) are excised as a propeptide. The Disintegrin domain occupies 47 to 111 (MNSPHPCCDP…PDCPRNPYKD (65 aa)). Cystine bridges form between cysteine 53–cysteine 76, cysteine 67–cysteine 73, cysteine 72–cysteine 97, and cysteine 85–cysteine 104. A Cell attachment site motif is present at residues 89–91 (RGD).

As to quaternary structure, heterodimer; disulfide-linked.

Its subcellular location is the secreted. In terms of biological role, inhibits ADP-induced platelet aggregation in human platelet-rich plasma (IC(50) is 8 uM). This Atheris squamigera (Variable bush viper) protein is Disintegrin DS-AS.